The chain runs to 144 residues: D-aminoacyl-tRNA deacylase (144 aa).

A Gly-cisPro motif, important for rejection of L-amino acids motif is present at residues 136 to 137 (GP).

Belongs to the DTD family. Homodimer.

The protein resides in the cytoplasm. The enzyme catalyses glycyl-tRNA(Ala) + H2O = tRNA(Ala) + glycine + H(+). It catalyses the reaction a D-aminoacyl-tRNA + H2O = a tRNA + a D-alpha-amino acid + H(+). Functionally, an aminoacyl-tRNA editing enzyme that deacylates mischarged D-aminoacyl-tRNAs. Also deacylates mischarged glycyl-tRNA(Ala), protecting cells against glycine mischarging by AlaRS. Acts via tRNA-based rather than protein-based catalysis; rejects L-amino acids rather than detecting D-amino acids in the active site. By recycling D-aminoacyl-tRNA to D-amino acids and free tRNA molecules, this enzyme counteracts the toxicity associated with the formation of D-aminoacyl-tRNA entities in vivo and helps enforce protein L-homochirality. In Haemophilus influenzae (strain ATCC 51907 / DSM 11121 / KW20 / Rd), this protein is D-aminoacyl-tRNA deacylase.